We begin with the raw amino-acid sequence, 63 residues long: Large ribosomal subunit protein uL30 (63 aa).

The protein belongs to the universal ribosomal protein uL30 family. As to quaternary structure, part of the 50S ribosomal subunit.

In Xylella fastidiosa (strain M23), this protein is Large ribosomal subunit protein uL30.